Consider the following 365-residue polypeptide: Metallophosphoesterase 1 homolog (365 aa).

The chain crosses the membrane as a helical span at residues 10–30 (PILLAIILVVYNEYFIFFIAF). A divalent metal cation-binding residues include Asp-54, Asp-96, Asn-132, His-208, His-262, and His-264. The helical transmembrane segment at 319–339 (ILQIMVYIFGGIGIVILAFIL) threads the bilayer.

Belongs to the metallophosphoesterase superfamily. MPPE1 family. Mn(2+) is required as a cofactor.

The protein localises to the endoplasmic reticulum-Golgi intermediate compartment membrane. Its subcellular location is the golgi apparatus. The protein resides in the cis-Golgi network membrane. Its function is as follows. Metallophosphoesterase required for transport of GPI-anchor proteins from the endoplasmic reticulum to the Golgi. Acts in lipid remodeling steps of GPI-anchor maturation by mediating the removal of a side-chain ethanolamine-phosphate (EtNP) from the second Man (Man2) of the GPI intermediate, an essential step for efficient transport of GPI-anchor proteins. This is Metallophosphoesterase 1 homolog from Caenorhabditis elegans.